Consider the following 747-residue polypeptide: Potassium transporter 20 (747 aa).

The Cytoplasmic portion of the chain corresponds to 1 to 47; that stretch reads MSVQEDDDAAGPEVDRLRRHDSFYGDAEKVSNDKSHGTGENWARTLQ. The helical transmembrane segment at 48-68 threads the bilayer; that stretch reads LAFQSIGVVYGDVGTSPLYVY. The Extracellular segment spans residues 69–84; sequence SSTFPDGVKHPDDLVG. Residues 85 to 105 traverse the membrane as a helical segment; it reads VLSLMLYTLILIPMVKYVFIV. Residues 106 to 171 lie on the Cytoplasmic side of the membrane; it reads LYANDNGDGG…QKLESSNAAK (66 aa). Residues 172–192 traverse the membrane as a helical segment; the sequence is IALFTITILGTSMVMGDGTLT. Topologically, residues 193 to 209 are extracellular; sequence PAISVLSAVSGIREKAP. A helical transmembrane segment spans residues 210–230; it reads SLTQLQVVWISVPILIVLFSV. Over 231-237 the chain is Cytoplasmic; sequence QRFGTDK. Residues 238–258 form a helical membrane-spanning segment; it reads VGYSFAPVISVWFVLIAGIGA. The Extracellular segment spans residues 259–288; it reads YNLAVHEITILRAFNPMYIIDYFRRNGKEA. A helical membrane pass occupies residues 289-309; that stretch reads WVSLGGAVLCITGTEAMFADL. Topologically, residues 310–318 are cytoplasmic; sequence GHFNIRAIQ. A helical transmembrane segment spans residues 319–339; that stretch reads LSFTCVLFPSVALCYMGQAAY. The Extracellular segment spans residues 340-353; the sequence is LRKFPEDVGDTFYK. A helical membrane pass occupies residues 354 to 374; that stretch reads SLPAPLFWPVFVVAIMAAIIA. Topologically, residues 375–410 are cytoplasmic; that stretch reads SQAMLSGAFAILSKALPLGCFPRVEVVHTSNKYEGQ. Residues 411-431 traverse the membrane as a helical segment; it reads VYIPEVNFLIGVASVAITVAF. Residues 432–442 lie on the Extracellular side of the membrane; that stretch reads QTTANIGNAYG. Residues 443 to 463 traverse the membrane as a helical segment; it reads ICVVMVFSITTHLMTVVMLLI. Topologically, residues 464–469 are cytoplasmic; sequence WKVRLP. Residues 470 to 490 traverse the membrane as a helical segment; that stretch reads FIAAFYVVFTFTEFLYLSSIL. The Extracellular portion of the chain corresponds to 491–496; the sequence is SKFAEG. The helical transmembrane segment at 497–517 threads the bilayer; it reads GYLPFCFSLVLMALMATWHYV. The Cytoplasmic segment spans residues 518 to 747; sequence HVKRYWYELD…LLKVGITYEI (230 aa).

The protein belongs to the HAK/KUP transporter (TC 2.A.72.3) family.

Its subcellular location is the membrane. High-affinity potassium transporter. In Oryza sativa subsp. japonica (Rice), this protein is Potassium transporter 20 (HAK20).